Consider the following 514-residue polypeptide: GMP synthase [glutamine-hydrolyzing] (514 aa).

A Glutamine amidotransferase type-1 domain is found at 7–197 (KVLILDFGSQ…LFNICKCERN (191 aa)). C84 functions as the Nucleophile in the catalytic mechanism. Active-site residues include H171 and E173. In terms of domain architecture, GMPS ATP-PPase spans 198–389 (WNMGSFIEYE…LKLPEDIVYR (192 aa)). 225-231 (SGGVDSS) serves as a coordination point for ATP.

In terms of assembly, homodimer.

It catalyses the reaction XMP + L-glutamine + ATP + H2O = GMP + L-glutamate + AMP + diphosphate + 2 H(+). It participates in purine metabolism; GMP biosynthesis; GMP from XMP (L-Gln route): step 1/1. In terms of biological role, catalyzes the synthesis of GMP from XMP. The protein is GMP synthase [glutamine-hydrolyzing] of Brachyspira hyodysenteriae (strain ATCC 49526 / WA1).